Here is an 805-residue protein sequence, read N- to C-terminus: DNA gyrase subunit B (805 aa).

Residues 435 to 550 (SEIFIVEGDS…RGYIYIAQPP (116 aa)) form the Toprim domain. Mg(2+) is bound by residues glutamate 441, aspartate 515, and aspartate 517.

It belongs to the type II topoisomerase GyrB family. As to quaternary structure, heterotetramer, composed of two GyrA and two GyrB chains. In the heterotetramer, GyrA contains the active site tyrosine that forms a transient covalent intermediate with DNA, while GyrB binds cofactors and catalyzes ATP hydrolysis. The cofactor is Mg(2+). Mn(2+) is required as a cofactor. It depends on Ca(2+) as a cofactor.

It is found in the cytoplasm. The enzyme catalyses ATP-dependent breakage, passage and rejoining of double-stranded DNA.. Functionally, a type II topoisomerase that negatively supercoils closed circular double-stranded (ds) DNA in an ATP-dependent manner to modulate DNA topology and maintain chromosomes in an underwound state. Negative supercoiling favors strand separation, and DNA replication, transcription, recombination and repair, all of which involve strand separation. Also able to catalyze the interconversion of other topological isomers of dsDNA rings, including catenanes and knotted rings. Type II topoisomerases break and join 2 DNA strands simultaneously in an ATP-dependent manner. This chain is DNA gyrase subunit B, found in Caulobacter vibrioides (strain ATCC 19089 / CIP 103742 / CB 15) (Caulobacter crescentus).